Here is a 219-residue protein sequence, read N- to C-terminus: Putative ankyrin repeat protein BB_0399 (219 aa).

ANK repeat units follow at residues 104 to 133, 137 to 166, and 170 to 199; these read YKISPISISIINNEFEITKILIDYGISLNQ, TGYSPIFWAIYTNNEKIFEFLKESGADLSF, and NRKTPMQAAIETENIKLIKSLEKKKIYIDD.

This Borreliella burgdorferi (strain ATCC 35210 / DSM 4680 / CIP 102532 / B31) (Borrelia burgdorferi) protein is Putative ankyrin repeat protein BB_0399.